We begin with the raw amino-acid sequence, 258 residues long: tRNA pseudouridine synthase A (258 aa).

Residue Asp53 is the Nucleophile of the active site. Tyr111 serves as a coordination point for substrate.

Belongs to the tRNA pseudouridine synthase TruA family. In terms of assembly, homodimer.

It carries out the reaction uridine(38/39/40) in tRNA = pseudouridine(38/39/40) in tRNA. Functionally, formation of pseudouridine at positions 38, 39 and 40 in the anticodon stem and loop of transfer RNAs. This chain is tRNA pseudouridine synthase A, found in Streptococcus agalactiae serotype Ia (strain ATCC 27591 / A909 / CDC SS700).